The chain runs to 112 residues: Nitrogenase-stabilizing/protective protein NifW (112 aa).

The protein belongs to the NifW family. Homotrimer; associates with NifD.

May protect the nitrogenase Fe-Mo protein from oxidative damage. This Paraburkholderia xenovorans (strain LB400) protein is Nitrogenase-stabilizing/protective protein NifW.